The chain runs to 95 residues: Aspartyl/glutamyl-tRNA(Asn/Gln) amidotransferase subunit C (95 aa).

The protein belongs to the GatC family. Heterotrimer of A, B and C subunits.

It catalyses the reaction L-glutamyl-tRNA(Gln) + L-glutamine + ATP + H2O = L-glutaminyl-tRNA(Gln) + L-glutamate + ADP + phosphate + H(+). The catalysed reaction is L-aspartyl-tRNA(Asn) + L-glutamine + ATP + H2O = L-asparaginyl-tRNA(Asn) + L-glutamate + ADP + phosphate + 2 H(+). Allows the formation of correctly charged Asn-tRNA(Asn) or Gln-tRNA(Gln) through the transamidation of misacylated Asp-tRNA(Asn) or Glu-tRNA(Gln) in organisms which lack either or both of asparaginyl-tRNA or glutaminyl-tRNA synthetases. The reaction takes place in the presence of glutamine and ATP through an activated phospho-Asp-tRNA(Asn) or phospho-Glu-tRNA(Gln). The polypeptide is Aspartyl/glutamyl-tRNA(Asn/Gln) amidotransferase subunit C (Chromobacterium violaceum (strain ATCC 12472 / DSM 30191 / JCM 1249 / CCUG 213 / NBRC 12614 / NCIMB 9131 / NCTC 9757 / MK)).